The sequence spans 115 residues: Promotilin (115 aa).

An N-terminal signal peptide occupies residues 1 to 25; it reads MVSRKAVAALLVVHAPAMLASQTEA. A disordered region spans residues 40–74; it reads EKERSKGQKKSLSVWQRSGEEGPVDPAEPIEEEGN.

It belongs to the motilin family.

The protein resides in the secreted. Plays an important role in the regulation of interdigestive gastrointestinal motility and indirectly causes rhythmic contraction of duodenal and colonic smooth muscle. The sequence is that of Promotilin (MLN) from Macaca mulatta (Rhesus macaque).